The chain runs to 334 residues: N-acetyl-gamma-glutamyl-phosphate reductase (334 aa).

Cys-154 is a catalytic residue.

Belongs to the NAGSA dehydrogenase family. Type 1 subfamily.

It is found in the cytoplasm. The enzyme catalyses N-acetyl-L-glutamate 5-semialdehyde + phosphate + NADP(+) = N-acetyl-L-glutamyl 5-phosphate + NADPH + H(+). It participates in amino-acid biosynthesis; L-arginine biosynthesis; N(2)-acetyl-L-ornithine from L-glutamate: step 3/4. Functionally, catalyzes the NADPH-dependent reduction of N-acetyl-5-glutamyl phosphate to yield N-acetyl-L-glutamate 5-semialdehyde. The sequence is that of N-acetyl-gamma-glutamyl-phosphate reductase from Yersinia pestis.